Consider the following 87-residue polypeptide: Small ribosomal subunit protein uS17 (87 aa).

It belongs to the universal ribosomal protein uS17 family. In terms of assembly, part of the 30S ribosomal subunit.

Functionally, one of the primary rRNA binding proteins, it binds specifically to the 5'-end of 16S ribosomal RNA. The polypeptide is Small ribosomal subunit protein uS17 (Bacillus velezensis (strain DSM 23117 / BGSC 10A6 / LMG 26770 / FZB42) (Bacillus amyloliquefaciens subsp. plantarum)).